Reading from the N-terminus, the 669-residue chain is GTP-binding protein 1 (669 aa).

Positions Met1–Ala32 are disordered. Residues Ser6, Ser8, Ser12, Ser24, Ser25, Ser44, Ser47, and Ser69 each carry the phosphoserine modification. The region spanning Phe158 to Tyr389 is the tr-type G domain. Residues Gly167–Ser174 are G1. Residue Gly167 to Ser174 participates in GTP binding. The interval Gly206 to Ser210 is G2. Residues Asp252–Gly255 form a G3 region. GTP is bound by residues Asp252–His256 and Thr308–Asp311. The tract at residues Thr308–Asp311 is G4. Residues Ser366–Val368 are G5. Residues Leu573–Lys595 show a composition bias toward polar residues. The interval Leu573–Cys669 is disordered. Phosphoserine is present on Ser580. Over residues Gly646–Lys657 the composition is skewed to basic residues.

The protein belongs to the TRAFAC class translation factor GTPase superfamily. Classic translation factor GTPase family. GTPBP1 subfamily. In terms of assembly, interacts with EXOSC2/RRP4, EXOSC3/RRP40, EXOSC5/RRP46, HNRNPD, HNRNPR and SYNCRIP. Identified in a complex with AANAT mRNA, but does not bind mRNA by itself.

It is found in the cytoplasm. Functionally, promotes degradation of target mRNA species. Plays a role in the regulation of circadian mRNA stability. Binds GTP and has GTPase activity. The chain is GTP-binding protein 1 (GTPBP1) from Homo sapiens (Human).